A 1082-amino-acid polypeptide reads, in one-letter code: RNA-directed RNA polymerase (1082 aa).

Residues 498 to 670 (LSYGDVTRYL…ALASLTGCEI (173 aa)) form the RdRp catalytic domain.

Belongs to the reoviridae RNA-directed RNA polymerase family. In terms of assembly, interacts with VP3 (Potential). Interacts with VP2; this interaction activates VP1. Interacts with NSP5; this interaction is probably necessary for the formation of functional virus factories. Interacts with NSP2; this interaction is weak. Requires Mg(2+) as cofactor.

It is found in the virion. The enzyme catalyses RNA(n) + a ribonucleoside 5'-triphosphate = RNA(n+1) + diphosphate. RNA-directed RNA polymerase that is involved in both transcription and genome replication. Together with VP3 capping enzyme, forms an enzyme complex positioned near the channels situated at each of the five-fold vertices of the core. Following infection, the outermost layer of the virus is lost, leaving a double-layered particle (DLP) made up of the core and VP6 shell. VP1 then catalyzes the transcription of fully conservative plus-strand genomic RNAs that are extruded through the DLP's channels into the cytoplasm where they function as mRNAs for translation of viral proteins. One copy of each of the viral (+)RNAs is also recruited during core assembly, together with newly synthesized polymerase complexes and VP2. The polymerase of these novo-formed particles catalyzes the synthesis of complementary minus-strands leading to dsDNA formation. To do so, the polymerase specifically recognizes conserved 3' sequence(s) in plus-strand RNA templates. Once dsRNA synthesis is complete, the polymerase switches to the transcriptional mode, thus providing secondary transcription. This chain is RNA-directed RNA polymerase, found in Rotavirus C (strain RVC/Pig/United States/Cowden/1980) (RV-C).